Here is a 457-residue protein sequence, read N- to C-terminus: tRNA modification GTPase MnmE (457 aa).

Residues Arg23, Glu85, and Arg124 each coordinate (6S)-5-formyl-5,6,7,8-tetrahydrofolate. The TrmE-type G domain occupies 220–376 (GALVVLAGQV…LVTAIRAAVL (157 aa)). Position 230 (Asn230) interacts with K(+). Residues 230–235 (NAGKSS), 249–255 (TDLPGTT), and 274–277 (DTAG) contribute to the GTP site. Ser234 is a binding site for Mg(2+). Residues Thr249, Leu251, and Thr254 each coordinate K(+). A Mg(2+)-binding site is contributed by Thr255. (6S)-5-formyl-5,6,7,8-tetrahydrofolate is bound at residue Lys457.

Belongs to the TRAFAC class TrmE-Era-EngA-EngB-Septin-like GTPase superfamily. TrmE GTPase family. Homodimer. Heterotetramer of two MnmE and two MnmG subunits. It depends on K(+) as a cofactor.

It is found in the cytoplasm. Exhibits a very high intrinsic GTPase hydrolysis rate. Involved in the addition of a carboxymethylaminomethyl (cmnm) group at the wobble position (U34) of certain tRNAs, forming tRNA-cmnm(5)s(2)U34. This chain is tRNA modification GTPase MnmE, found in Nitratidesulfovibrio vulgaris (strain ATCC 29579 / DSM 644 / CCUG 34227 / NCIMB 8303 / VKM B-1760 / Hildenborough) (Desulfovibrio vulgaris).